Consider the following 315-residue polypeptide: Acetaldehyde dehydrogenase 2 (315 aa).

11–14 (SGNI) contributes to the NAD(+) binding site. Cys129 functions as the Acyl-thioester intermediate in the catalytic mechanism. Residues 160-168 (SAGPGTRSN) and Asn290 each bind NAD(+).

Belongs to the acetaldehyde dehydrogenase family.

It carries out the reaction acetaldehyde + NAD(+) + CoA = acetyl-CoA + NADH + H(+). The protein is Acetaldehyde dehydrogenase 2 of Mycobacterium sp. (strain KMS).